The chain runs to 189 residues: Interferon alpha-14 (189 aa).

Residues 1 to 23 (MALPFALMMALVVLSCKSSCSLG) form the signal peptide. Disulfide bonds link C24–C122 and C52–C162. N95 carries N-linked (GlcNAc...) asparagine glycosylation.

The protein belongs to the alpha/beta interferon family.

It localises to the secreted. Functionally, produced by macrophages, IFN-alpha have antiviral activities. Interferon stimulates the production of two enzymes: a protein kinase and an oligoadenylate synthetase. The polypeptide is Interferon alpha-14 (IFNA14) (Homo sapiens (Human)).